We begin with the raw amino-acid sequence, 766 residues long: Semaphorin-4E (766 aa).

A signal peptide spans 1-24; it reads MMSLLAVLCVLYVWSPAMLTGGLG. At 25-664 the chain is on the extracellular side; it reads STLDSLPRKT…LHHVKEKERT (640 aa). Residues 27–499 form the Sema domain; the sequence is LDSLPRKTVP…SEVGVVQLSI (473 aa). N52 is a glycosylation site (N-linked (GlcNAc...) asparagine). Disulfide bonds link C100–C111, C129–C138, C261–C373, and C285–C329. N433 is a glycosylation site (N-linked (GlcNAc...) asparagine). One can recognise a PSI domain in the interval 501 to 552; the sequence is ECGRYQTCLDCVLARDPHCGWDLDTEHCATINSIHRTRSSTVIQSLNDGDAS. 2 cysteine pairs are disulfide-bonded: C502–C519 and C511–C528. An Ig-like C2-type domain is found at 555 to 640; sequence PAIGVSKPVN…QRKYQTQHVA (86 aa). N564 and N612 each carry an N-linked (GlcNAc...) asparagine glycan. A disulfide bridge links C577 with C623. Residues 665–685 traverse the membrane as a helical segment; the sequence is LVAMVVILSLVLAALLIWNLY. Residues 686–766 lie on the Cytoplasmic side of the membrane; the sequence is KGHLSLPCLH…LKYIDDESEI (81 aa). The segment at 724–750 is disordered; sequence FNSNNNHANDQRYSSSRETDRLSTTAG.

This sequence belongs to the semaphorin family.

It localises to the membrane. The chain is Semaphorin-4E (sema4e) from Danio rerio (Zebrafish).